Reading from the N-terminus, the 494-residue chain is MESERAAYAFLPQTPIKSTDAHLVEFSEAMRAVAKTLRQVAEGKAAAQAEAAEWKRKYELEKAVKAHRHNTVTKGCSNCDKEKLEQLASQLTLETTSVDPTSCCGNHEICSRQILQDECPGTNKISHDKIAARKAPFKLSWGCNGDNNGQHKHDFVSFEKGDITTAERSNKQILLKWESPPQTVLFVTKPNSNSVHALCAEMVRWLKEHNNINIFVEPRVSKELVTEDSYFNFIQTWDNDEEMKTLHTKVDLIVTLGGDGTVLWAASLFKGPVPPVVAFSLGSLGFMTPFSSELYRECLDHVLKRPFGITLRSRLQCHVIYDSAKNEVDTEEPILVLNEVTIDRGMSSYLTYLECYCDSSFVTRVQGDGLIISTTSGSTAYSLAAGGSMVHPQVPGILFTPICPHSLSFRPLILPEYVTLRVQVPINSRGQAWASFDGKGRKQLGPGDALICSISPWPVPTACLVDSTTDFLRSIHEGLHWNLRKSQSFDGPVA.

It belongs to the NAD kinase family.

It carries out the reaction NAD(+) + ATP = ADP + NADP(+) + H(+). The chain is Putative NAD kinase 3 from Oryza sativa subsp. japonica (Rice).